The chain runs to 235 residues: Claudin-16 (235 aa).

The Cytoplasmic segment spans residues 1–3 (MRD). The helical transmembrane segment at 4-24 (LLQYIACFFAFFSAGFLIVAT) threads the bilayer. Over 25–79 (WTDCWMVNADDSLEVSTKCRGLWWECVTNAFDGIRTCDEYDSILAEHPLKLVVTR) the chain is Extracellular. A helical membrane pass occupies residues 80 to 100 (ALMITADILAGFGFLTLLLGL). Topologically, residues 101 to 115 (DCVKFLPDEPYIKVR) are cytoplasmic. A helical membrane pass occupies residues 116–136 (ICFVAGATLLIAGTPGIIGSV). The Extracellular segment spans residues 137–169 (WYAVDVYVERSTLVLHNIFLGIQYKFGWSCWLG). The chain crosses the membrane as a helical span at residues 170–190 (MAGSLGCFLAGAVLTCCLYLF). Over 191 to 235 (KDVGPERNYPYSLRKAYSAAGVSMAKSYSAPRTETAKMYAVDTRV) the chain is Cytoplasmic. The Interaction with TJP1 motif lies at 233-235 (TRV).

Belongs to the claudin family. As to quaternary structure, can form heteropolymeric tight junction strands with other claudins. Interacts with CLDN19. Interacts (via PDZ-binding motif TRV) with TJP1 (via PDZ domain). Cannot form tight junction strands on its own. In terms of tissue distribution, kidney-specific, including the thick ascending limb of Henle (TAL).

It localises to the cell junction. The protein localises to the tight junction. The protein resides in the cell membrane. It catalyses the reaction Mg(2+)(in) = Mg(2+)(out). The enzyme catalyses Ca(2+)(in) = Ca(2+)(out). It carries out the reaction Na(+)(in) = Na(+)(out). The catalysed reaction is K(+)(in) = K(+)(out). It catalyses the reaction Rb(+)(in) = Rb(+)(out). The enzyme catalyses Cs(+)(in) = Cs(+)(out). It carries out the reaction Li(+)(in) = Li(+)(out). Forms paracellular channels: coassembles with CLDN19 into tight junction strands with cation-selective channels through the strands, conveying epithelial permeability in a process known as paracellular tight junction permeability. Involved in the maintenance of ion gradients along the nephron. In the thick ascending limb (TAL) of Henle's loop, facilitates sodium paracellular permeability from the interstitial compartment to the lumen, contributing to the lumen-positive transepithelial potential that drives paracellular magnesium and calcium reabsorption. This Homo sapiens (Human) protein is Claudin-16.